The primary structure comprises 592 residues: Probable translation initiation factor IF-2 (592 aa).

Positions 5–226 constitute a tr-type G domain; it reads IRSPFVVVMG…AGVSQRFIPR (222 aa). Residues 14–21 are G1; it reads GHVDVGKT. GTP is bound at residue 14–21; sequence GHVDVGKT. A G2 region spans residues 39-43; the sequence is MITQH. Positions 80–83 are G3; sequence DTPG. GTP is bound by residues 80-84 and 134-137; these read DTPGH and NKLD. A G4 region spans residues 134 to 137; that stretch reads NKLD. Residues 202-204 are G5; sequence SAV.

Belongs to the TRAFAC class translation factor GTPase superfamily. Classic translation factor GTPase family. IF-2 subfamily.

In terms of biological role, function in general translation initiation by promoting the binding of the formylmethionine-tRNA to ribosomes. Seems to function along with eIF-2. This Pyrobaculum calidifontis (strain DSM 21063 / JCM 11548 / VA1) protein is Probable translation initiation factor IF-2.